The chain runs to 341 residues: Flagellar P-ring protein (341 aa).

The first 19 residues, 1 to 19 (MKQVFLWLIFVLAFHKLLA), serve as a signal peptide directing secretion.

It belongs to the FlgI family. The basal body constitutes a major portion of the flagellar organelle and consists of four rings (L,P,S, and M) mounted on a central rod.

The protein localises to the periplasm. The protein resides in the bacterial flagellum basal body. In terms of biological role, assembles around the rod to form the L-ring and probably protects the motor/basal body from shearing forces during rotation. The polypeptide is Flagellar P-ring protein (Helicobacter acinonychis (strain Sheeba)).